Reading from the N-terminus, the 70-residue chain is Large ribosomal subunit protein eL38 (70 aa).

The protein belongs to the eukaryotic ribosomal protein eL38 family.

In Artemia franciscana (Brine shrimp), this protein is Large ribosomal subunit protein eL38 (RPL38).